A 32-amino-acid polypeptide reads, in one-letter code: Yop proteins translocation protein A (32 aa).

In Yersinia enterocolitica serotype O:8 / biotype 1B (strain NCTC 13174 / 8081), this protein is Yop proteins translocation protein A (yscA).